Reading from the N-terminus, the 233-residue chain is Cilia- and flagella-associated protein 299 (233 aa).

It is found in the cytoplasm. It localises to the nucleus. May be involved in spermatogenesis. The polypeptide is Cilia- and flagella-associated protein 299 (Homo sapiens (Human)).